We begin with the raw amino-acid sequence, 124 residues long: Large ribosomal subunit protein bL12 (124 aa).

The protein belongs to the bacterial ribosomal protein bL12 family. In terms of assembly, homodimer. Part of the ribosomal stalk of the 50S ribosomal subunit. Forms a multimeric L10(L12)X complex, where L10 forms an elongated spine to which 2 to 4 L12 dimers bind in a sequential fashion. Binds GTP-bound translation factors.

In terms of biological role, forms part of the ribosomal stalk which helps the ribosome interact with GTP-bound translation factors. Is thus essential for accurate translation. This Rickettsia akari (strain Hartford) protein is Large ribosomal subunit protein bL12.